The primary structure comprises 172 residues: MRVLGVDPGLTRCGLGVVDGGLGIRAHLVEVGVVRTPATAEVAERLCAVSDGIDAWLDRTRPEAVAVEKVFSQANMRTVMGTAQAGAVAIVLAARRGLPVGLYTPSEVKAAVTGSGRADKAQVSFMITRLLGLTEAPRPADAADALALALCHLWRGPALARFRSAAPGGPTR.

Catalysis depends on residues Asp7, Glu68, and Asp141. Mg(2+) contacts are provided by Asp7, Glu68, and Asp141.

The protein belongs to the RuvC family. As to quaternary structure, homodimer which binds Holliday junction (HJ) DNA. The HJ becomes 2-fold symmetrical on binding to RuvC with unstacked arms; it has a different conformation from HJ DNA in complex with RuvA. In the full resolvosome a probable DNA-RuvA(4)-RuvB(12)-RuvC(2) complex forms which resolves the HJ. It depends on Mg(2+) as a cofactor.

The protein localises to the cytoplasm. The catalysed reaction is Endonucleolytic cleavage at a junction such as a reciprocal single-stranded crossover between two homologous DNA duplexes (Holliday junction).. In terms of biological role, the RuvA-RuvB-RuvC complex processes Holliday junction (HJ) DNA during genetic recombination and DNA repair. Endonuclease that resolves HJ intermediates. Cleaves cruciform DNA by making single-stranded nicks across the HJ at symmetrical positions within the homologous arms, yielding a 5'-phosphate and a 3'-hydroxyl group; requires a central core of homology in the junction. The consensus cleavage sequence is 5'-(A/T)TT(C/G)-3'. Cleavage occurs on the 3'-side of the TT dinucleotide at the point of strand exchange. HJ branch migration catalyzed by RuvA-RuvB allows RuvC to scan DNA until it finds its consensus sequence, where it cleaves and resolves the cruciform DNA. The polypeptide is Crossover junction endodeoxyribonuclease RuvC (Frankia casuarinae (strain DSM 45818 / CECT 9043 / HFP020203 / CcI3)).